The following is a 90-amino-acid chain: Acylphosphatase (90 aa).

The 86-residue stretch at 5–90 folds into the Acylphosphatase-like domain; that stretch reads SFVVRVWGLV…PPKGSGFHTN (86 aa). Active-site residues include Arg20 and Asn38.

It belongs to the acylphosphatase family.

The enzyme catalyses an acyl phosphate + H2O = a carboxylate + phosphate + H(+). The polypeptide is Acylphosphatase (acyP) (Aeromonas hydrophila subsp. hydrophila (strain ATCC 7966 / DSM 30187 / BCRC 13018 / CCUG 14551 / JCM 1027 / KCTC 2358 / NCIMB 9240 / NCTC 8049)).